A 456-amino-acid chain; its full sequence is Bifunctional protein GlmU (456 aa).

Positions 1–228 are pyrophosphorylase; the sequence is MPQNTLNIVI…SHLAAGVNNK (228 aa). Residues 11-14, K25, Q75, 80-81, 102-104, G138, E153, N168, and N226 contribute to the UDP-N-acetyl-alpha-D-glucosamine site; these read LAAG, GT, and YGD. Mg(2+) is bound at residue D104. N226 is a Mg(2+) binding site. The interval 229-249 is linker; it reads LQLAELERIFQTEQAQELLKA. Residues 250–456 are N-acetyltransferase; it reads GVTLRDPARF…GWVRPEKNKQ (207 aa). Residues R332 and K350 each contribute to the UDP-N-acetyl-alpha-D-glucosamine site. H362 serves as the catalytic Proton acceptor. 2 residues coordinate UDP-N-acetyl-alpha-D-glucosamine: Y365 and N376. Acetyl-CoA is bound by residues A379, 385–386, S404, A422, and R439; that span reads NY.

It in the N-terminal section; belongs to the N-acetylglucosamine-1-phosphate uridyltransferase family. In the C-terminal section; belongs to the transferase hexapeptide repeat family. As to quaternary structure, homotrimer. The cofactor is Mg(2+).

Its subcellular location is the cytoplasm. The enzyme catalyses alpha-D-glucosamine 1-phosphate + acetyl-CoA = N-acetyl-alpha-D-glucosamine 1-phosphate + CoA + H(+). It catalyses the reaction N-acetyl-alpha-D-glucosamine 1-phosphate + UTP + H(+) = UDP-N-acetyl-alpha-D-glucosamine + diphosphate. It participates in nucleotide-sugar biosynthesis; UDP-N-acetyl-alpha-D-glucosamine biosynthesis; N-acetyl-alpha-D-glucosamine 1-phosphate from alpha-D-glucosamine 6-phosphate (route II): step 2/2. The protein operates within nucleotide-sugar biosynthesis; UDP-N-acetyl-alpha-D-glucosamine biosynthesis; UDP-N-acetyl-alpha-D-glucosamine from N-acetyl-alpha-D-glucosamine 1-phosphate: step 1/1. It functions in the pathway bacterial outer membrane biogenesis; LPS lipid A biosynthesis. Catalyzes the last two sequential reactions in the de novo biosynthetic pathway for UDP-N-acetylglucosamine (UDP-GlcNAc). The C-terminal domain catalyzes the transfer of acetyl group from acetyl coenzyme A to glucosamine-1-phosphate (GlcN-1-P) to produce N-acetylglucosamine-1-phosphate (GlcNAc-1-P), which is converted into UDP-GlcNAc by the transfer of uridine 5-monophosphate (from uridine 5-triphosphate), a reaction catalyzed by the N-terminal domain. The chain is Bifunctional protein GlmU from Neisseria meningitidis serogroup A / serotype 4A (strain DSM 15465 / Z2491).